A 587-amino-acid chain; its full sequence is ASI1-immunoprecipitated protein 3 (587 aa).

Positions 1-118 are disordered; that stretch reads MVLSRRFAQV…NVTGKGKGKR (118 aa). Residues 66–98 show a composition bias toward acidic residues; it reads EDEDMAEGDDDQAEEETNPEAEEEEDEEEEEKP. The region spanning 129 to 248 is the BAH domain; it reads NTYDLEVPVL…TVEKKLWKLT (120 aa). One can recognise a TFIIS central domain in the interval 344 to 493; the sequence is HRDKCLGKLL…RMQMTSVRCS (150 aa). 2 disordered regions span residues 371–396 and 539–587; these read EAKV…GKDE and TDKP…KKPE. Positions 560–570 are enriched in basic and acidic residues; sequence ETNKPKDEALK. The segment covering 571–581 has biased composition (polar residues); the sequence is TNDSNADNNPE.

Interacts with MOM1. Component of the ASI1-AIPP1-EDM2 (AAE) RNA regulatory complex composed of at least AIPP1/EDM3, ASI1 and EDM2 and may contain CPL2, AIPP2 and AIPP3/BDT1. Part of the BAH-PHD bivalent histone reader complex that contains AIPP2, PAIPP2 and AIPP3/BDT1; the BAH-PHD module associates with CPL2 to form the BAH-PHD-CPL2 complex (BPC) for transcriptional repression. Binds directly to CPL2, PHD1, PAIPP2/PHD2, AIPP2/PHD3, PHD4, PHD5 and PHD6. In terms of tissue distribution, expressed ubiquitously.

The protein localises to the nucleus. In terms of biological role, transcriptional repressor. Together with PHD finger-containing proteins (e.g. PHD1, PAIPP2/PHD2, AIPP2/PHD3, PHD4, PHD5 and PHD6), cooperates to form a BAH-PHD bivalent histone reader complex able to read histone H3 lysine 27 trimethylation (H3K27me3) and low-methylated H3K4 histone marks in order to regulate transcription, especially to prevent early flowering; H3K27me3 reader of this complex. CPL2 is subsequently recruited to form a BAH-PHD-CPL2 complex (BPC) in order to silence several H3K27me3 and low-methylated H3K4 enriched loci, including AGO5, via the phosphorylation state-dependent inhibition of Pol II release from the transcriptional start site (e.g. Ser5P-Pol II dephosphorylation). The BPC complex represses flowering by inhibiting the expression of several genes, including AGL6, FT, FUL and SOC1. Prevents the accumulation of intronic heterochromatin-containing genes (e.g. IBM1, At3g05410 and RPP7). Seems to not be involved in vernalization establishment, by contrast to orthologs in grass plants. This chain is ASI1-immunoprecipitated protein 3, found in Arabidopsis thaliana (Mouse-ear cress).